We begin with the raw amino-acid sequence, 222 residues long: UPF0502 protein Lcho_2066 (222 aa).

It belongs to the UPF0502 family.

This chain is UPF0502 protein Lcho_2066, found in Leptothrix cholodnii (strain ATCC 51168 / LMG 8142 / SP-6) (Leptothrix discophora (strain SP-6)).